Here is an 811-residue protein sequence, read N- to C-terminus: Glycerol-3-phosphate acyltransferase (811 aa).

The HXXXXD motif motif lies at 303-308; sequence CHRSHM.

It belongs to the GPAT/DAPAT family.

The protein localises to the cell inner membrane. It carries out the reaction sn-glycerol 3-phosphate + an acyl-CoA = a 1-acyl-sn-glycero-3-phosphate + CoA. Its pathway is phospholipid metabolism; CDP-diacylglycerol biosynthesis; CDP-diacylglycerol from sn-glycerol 3-phosphate: step 1/3. The sequence is that of Glycerol-3-phosphate acyltransferase from Glaesserella parasuis serovar 5 (strain SH0165) (Haemophilus parasuis).